Reading from the N-terminus, the 172-residue chain is uncharacterized protein (172 aa).

Disordered regions lie at residues 1–39 (MAKV…NSNN) and 90–112 (DLNG…GSIN). Residues 98–110 (NDSNNDNSPSRGS) show a composition bias toward low complexity.

This is an uncharacterized protein from Dictyostelium discoideum (Social amoeba).